The primary structure comprises 262 residues: Phosphatase SCO2771 (262 aa).

Functionally, displays phosphatase activity against p-nitrophenyl phosphate (pNPP) in vitro; however, the physiological substrate is unknown. The chain is Phosphatase SCO2771 from Streptomyces coelicolor (strain ATCC BAA-471 / A3(2) / M145).